Reading from the N-terminus, the 242-residue chain is Myogenic factor 6 (242 aa).

Positions 31 to 63 (SPLYPGSDGTLSPCQDQMPPEAGSDSSGEEHVL) are disordered. In terms of domain architecture, bHLH spans 93 to 144 (DRRKAATLRERRRLKKINEAFEALKRRTVANPNQRLPKVEILRSAINYIERL).

As to quaternary structure, efficient DNA binding requires dimerization with another bHLH protein.

Its subcellular location is the nucleus. Its function is as follows. Involved in muscle differentiation (myogenic factor). Induces fibroblasts to differentiate into myoblasts. Probable sequence specific DNA-binding protein. The polypeptide is Myogenic factor 6 (MYF6) (Sus scrofa (Pig)).